Here is a 326-residue protein sequence, read N- to C-terminus: 5-dehydro-2-deoxygluconokinase (326 aa).

The protein belongs to the carbohydrate kinase PfkB family.

It catalyses the reaction 5-dehydro-2-deoxy-D-gluconate + ATP = 6-phospho-5-dehydro-2-deoxy-D-gluconate + ADP + H(+). The protein operates within polyol metabolism; myo-inositol degradation into acetyl-CoA; acetyl-CoA from myo-inositol: step 5/7. Catalyzes the phosphorylation of 5-dehydro-2-deoxy-D-gluconate (2-deoxy-5-keto-D-gluconate or DKG) to 6-phospho-5-dehydro-2-deoxy-D-gluconate (DKGP). The chain is 5-dehydro-2-deoxygluconokinase from Lacticaseibacillus casei (Lactobacillus casei).